A 415-amino-acid polypeptide reads, in one-letter code: D-serine dehydratase (415 aa).

An N6-(pyridoxal phosphate)lysine modification is found at Lys68. 5 residues coordinate pyridoxal 5'-phosphate: Tyr204, Tyr211, Thr253, Gly279, and Asn280. The Zn(2+) site is built by His385 and Cys387.

The protein belongs to the DSD1 family. As to quaternary structure, homodimer. It depends on pyridoxal 5'-phosphate as a cofactor. The cofactor is Zn(2+).

The protein resides in the cytoplasm. Its subcellular location is the nucleus. It catalyses the reaction D-serine = pyruvate + NH4(+). Its function is as follows. Catalyzes the conversion of D-serine to pyruvate and ammonia. May play a role in D-serine detoxification. This Schizosaccharomyces pombe (strain 972 / ATCC 24843) (Fission yeast) protein is D-serine dehydratase.